Consider the following 343-residue polypeptide: L-threonine 3-dehydrogenase (343 aa).

Cys39 lines the Zn(2+) pocket. Residues Thr41 and His44 each act as charge relay system in the active site. The Zn(2+) site is built by His64, Glu65, Cys94, Cys97, Cys100, and Cys108. Residues Ile176, Asp196, Arg201, 263–265 (LGI), and 287–288 (IY) each bind NAD(+).

This sequence belongs to the zinc-containing alcohol dehydrogenase family. As to quaternary structure, homotetramer. Zn(2+) serves as cofactor.

The protein resides in the cytoplasm. It catalyses the reaction L-threonine + NAD(+) = (2S)-2-amino-3-oxobutanoate + NADH + H(+). Its pathway is amino-acid degradation; L-threonine degradation via oxydo-reductase pathway; glycine from L-threonine: step 1/2. Its function is as follows. Catalyzes the NAD(+)-dependent oxidation of L-threonine to 2-amino-3-ketobutyrate. This chain is L-threonine 3-dehydrogenase, found in Anaeromyxobacter sp. (strain Fw109-5).